Reading from the N-terminus, the 181-residue chain is Oligoribonuclease (181 aa).

The 164-residue stretch at 8-171 (LVWIDMEMTG…DDIRESIAEL (164 aa)) folds into the Exonuclease domain. Tyr-129 is an active-site residue.

Belongs to the oligoribonuclease family.

The protein resides in the cytoplasm. 3'-to-5' exoribonuclease specific for small oligoribonucleotides. In Aeromonas hydrophila subsp. hydrophila (strain ATCC 7966 / DSM 30187 / BCRC 13018 / CCUG 14551 / JCM 1027 / KCTC 2358 / NCIMB 9240 / NCTC 8049), this protein is Oligoribonuclease.